Consider the following 1350-residue polypeptide: Protein transport protein SEC16A homolog (1350 aa).

Disordered regions lie at residues 26-45, 73-97, 964-1063, 1118-1216, and 1235-1350; these read YTPT…GSDS, LGND…SIAP, MPPP…TRKV, AEEA…KPPI, and QVME…EVEL. A compositionally biased stretch (basic and acidic residues) spans 35–45; that stretch reads KELKFDDGSDS. Phosphoserine is present on serine 43. The segment covering 970–1002 has biased composition (polar residues); it reads HSTTGNPQVNEYQHQQQEAAKLSYSQSANTMSS. Low complexity predominate over residues 1150-1168; the sequence is SPSSGSWSSGSPTPSENSP. Composition is skewed to polar residues over residues 1195 to 1210 and 1289 to 1316; these read TYNQ…PPVQ and RSGS…GSVN. Residues 1317–1343 show a composition bias toward low complexity; sequence SSSFMSPTSASTFRPSPLNSSSSSLGE.

It belongs to the SEC16 family. As to quaternary structure, interacts with SEC13A, SEC13B and SEC31A.

The protein resides in the golgi apparatus. It is found in the golgi stack. Its subcellular location is the endoplasmic reticulum. Required for efficient protein export from the endoplasmic reticulum (ER) to the Golgi by regulating COPII coat dynamics at the ER. Functions as a scaffold and regulator of COPII coat assembly at ER exit sites. This chain is Protein transport protein SEC16A homolog, found in Arabidopsis thaliana (Mouse-ear cress).